The primary structure comprises 173 residues: MAAEGEKKMITLKSSDGEEFEVEEAVAMESQTIRHMIEDDCADNGIPLPNVNSKILSKVIEYCNKHVHAAAAAASKAADDAASAAAAVPPPSGEDLKNWDADFVKVDQATLFDLILAANYLNIKGLLDLTCQTVADMIKGKTPEEIRKTFNIKNDFTPEEEEEIRRENQWAFE.

The interval 115–173 (ILAANYLNIKGLLDLTCQTVADMIKGKTPEEIRKTFNIKNDFTPEEEEEIRRENQWAFE) is interaction with the F-box domain of F-box proteins.

This sequence belongs to the SKP1 family. In terms of assembly, part of a SCF (SKP1-CUL1-F-box protein) E3 ubiquitin-protein ligase complex. Interacts directly with MOF (via F-box domain). Interacts with rice black streaked dwarf virus RBSDV protein P7-2. Is able to form the SCF complex together with CUL1 and the viral P7-2 protein. Interacts with D3.

The protein resides in the nucleus. It functions in the pathway protein modification; protein ubiquitination. In terms of biological role, involved in ubiquitination and subsequent proteasomal degradation of target proteins. Together with CUL1, a RING-box and a F-box protein, it forms a SCF E3 ubiquitin ligase complex. The functional specificity of this complex depends on the type of F-box protein. In the SCF complex, it serves as an adapter that links the F-box protein to CUL1. The polypeptide is SKP1-like protein 1 (Oryza sativa subsp. japonica (Rice)).